A 626-amino-acid polypeptide reads, in one-letter code: Fructose-1,6-bisphosphatase class 3 (626 aa).

Belongs to the FBPase class 3 family. It depends on Mn(2+) as a cofactor.

The enzyme catalyses beta-D-fructose 1,6-bisphosphate + H2O = beta-D-fructose 6-phosphate + phosphate. It functions in the pathway carbohydrate biosynthesis; gluconeogenesis. This is Fructose-1,6-bisphosphatase class 3 from Enterococcus faecalis (strain ATCC 700802 / V583).